Reading from the N-terminus, the 345-residue chain is Fructose-1,6-bisphosphatase class 1 2 (345 aa).

Mg(2+)-binding residues include glutamate 90, aspartate 109, leucine 111, and aspartate 112. Substrate-binding positions include 112–115 (DGSS) and asparagine 200. Residue glutamate 272 participates in Mg(2+) binding.

Belongs to the FBPase class 1 family. In terms of assembly, homotetramer. Mg(2+) serves as cofactor.

It is found in the cytoplasm. The enzyme catalyses beta-D-fructose 1,6-bisphosphate + H2O = beta-D-fructose 6-phosphate + phosphate. The protein operates within carbohydrate biosynthesis; gluconeogenesis. In Nitrobacter hamburgensis (strain DSM 10229 / NCIMB 13809 / X14), this protein is Fructose-1,6-bisphosphatase class 1 2.